Reading from the N-terminus, the 318-residue chain is Ribose-phosphate pyrophosphokinase (318 aa).

Residues 43–45 (DGE) and 102–103 (RQ) contribute to the ATP site. The Mg(2+) site is built by His136 and Asp176. The active site involves Lys199. D-ribose 5-phosphate is bound by residues Arg201, Asp225, and 229 to 233 (DTAGT).

This sequence belongs to the ribose-phosphate pyrophosphokinase family. Class I subfamily. As to quaternary structure, homohexamer. It depends on Mg(2+) as a cofactor.

The protein localises to the cytoplasm. It carries out the reaction D-ribose 5-phosphate + ATP = 5-phospho-alpha-D-ribose 1-diphosphate + AMP + H(+). It participates in metabolic intermediate biosynthesis; 5-phospho-alpha-D-ribose 1-diphosphate biosynthesis; 5-phospho-alpha-D-ribose 1-diphosphate from D-ribose 5-phosphate (route I): step 1/1. Involved in the biosynthesis of the central metabolite phospho-alpha-D-ribosyl-1-pyrophosphate (PRPP) via the transfer of pyrophosphoryl group from ATP to 1-hydroxyl of ribose-5-phosphate (Rib-5-P). This is Ribose-phosphate pyrophosphokinase from Listeria ivanovii.